The chain runs to 184 residues: Photosystem I assembly protein Ycf4 (184 aa).

Transmembrane regions (helical) follow at residues 19–39 (ISNF…VLVG) and 57–77 (ILFF…LFIS).

Belongs to the Ycf4 family.

It localises to the plastid. It is found in the chloroplast thylakoid membrane. Functionally, seems to be required for the assembly of the photosystem I complex. This chain is Photosystem I assembly protein Ycf4, found in Eucalyptus globulus subsp. globulus (Tasmanian blue gum).